The sequence spans 444 residues: MSSYLIKPELSSAYPVVSYAKGSYVYDQTGKKYLDGSSGAVTCNIGHGVRDVTEKLKEQLDQVSFAYRSQFTSEPAEQLAALLAQELPGDVNWSFFVNSGSEAIETAMKIAIQYWQEKKQTQKSIFLSRWSSYHGITLGALSLSGFYERRYRFTHLIERYPAISAPHIYRLNHETEEDFVQTAADELDTMIKRIGSQFIAGFVAEPIIGAAGAAITPPPGYYERLSEVCRTHDVLFIADEVMTGLGRTGRMLATEHWDTVPDIAVLGKGLGAGYAPIAAAVVSDSIIETIKQGSGVIMSGHTYSAHPYSAKAALEVLRYVLKHGLIKQSEKKGAVLKKKLDEAASQSGIIGEVRGKGLLLGIEFVADQKTKKVFPPEQAITQLIVSEAKKRGLIVYPSKAGIDSGEGDAVIIAPPFTISDGEMEELISIFSETVAAVEKNLKKD.

Lysine 268 carries the N6-(pyridoxal phosphate)lysine modification.

Belongs to the class-III pyridoxal-phosphate-dependent aminotransferase family. It depends on pyridoxal 5'-phosphate as a cofactor.

This is an uncharacterized protein from Bacillus subtilis (strain 168).